The chain runs to 359 residues: Fe-S cluster assembly protein DRE2 (359 aa).

The N-terminal SAM-like domain stretch occupies residues 1 to 148 (MASTGRVLLL…KPDVAAQQAV (148 aa)). Disordered regions lie at residues 97-116 (NKAW…NDND) and 149-210 (PLKL…PSGV). Residues 149–246 (PLKLGRRKKE…EDELLGEDDM (98 aa)) are linker. Over residues 152 to 164 (LGRRKKEKERRHP) the composition is skewed to basic residues. The span at 167 to 183 (NDVTNGKVNAPSSNGVN) shows a compositional bias: polar residues. Positions 184–200 (ASTSTATATATTTTTTT) are enriched in low complexity. C256, C267, C270, and C272 together coordinate [2Fe-2S] cluster. The interval 256–272 (CRPKPGKRRRACKDCSC) is fe-S binding site A. [4Fe-4S] cluster is bound by residues C322, C325, C333, and C336. 2 consecutive short sequence motifs (cx2C motif) follow at residues 322 to 325 (CGNC) and 333 to 336 (CDGC). Residues 322 to 336 (CGNCSLGDAFRCDGC) form a fe-S binding site B region.

The protein belongs to the anamorsin family. In terms of assembly, monomer. Interacts with TAH18. Interacts with MIA40. It depends on [2Fe-2S] cluster as a cofactor. [4Fe-4S] cluster serves as cofactor.

It localises to the cytoplasm. The protein resides in the mitochondrion intermembrane space. Functionally, component of the cytosolic iron-sulfur (Fe-S) protein assembly (CIA) machinery required for the maturation of extramitochondrial Fe-S proteins. Part of an electron transfer chain functioning in an early step of cytosolic Fe-S biogenesis, facilitating the de novo assembly of a [4Fe-4S] cluster on the scaffold complex CFD1-NBP35. Electrons are transferred to DRE2 from NADPH via the FAD- and FMN-containing protein TAH18. TAH18-DRE2 are also required for the assembly of the diferric tyrosyl radical cofactor of ribonucleotide reductase (RNR), probably by providing electrons for reduction during radical cofactor maturation in the catalytic small subunit RNR2. The polypeptide is Fe-S cluster assembly protein DRE2 (Blastomyces gilchristii (strain SLH14081) (Blastomyces dermatitidis)).